The chain runs to 336 residues: Phospho-N-acetylmuramoyl-pentapeptide-transferase (336 aa).

10 helical membrane-spanning segments follow: residues 3–23 (LTLI…PYFI), 53–73 (GGTV…LFSI), 78–98 (SLAL…IGFL), 118–138 (LALQ…PSGI), 143–163 (VFGY…FWVV), 174–194 (GIDG…GVIA), 200–220 (FDVL…FCFN), 226–246 (VFMG…ISIA), 251–271 (WTLL…MLQV), and 316–336 (AFLW…LYVF).

It belongs to the glycosyltransferase 4 family. MraY subfamily. It depends on Mg(2+) as a cofactor.

It is found in the cell membrane. The catalysed reaction is UDP-N-acetyl-alpha-D-muramoyl-L-alanyl-gamma-D-glutamyl-L-lysyl-D-alanyl-D-alanine + di-trans,octa-cis-undecaprenyl phosphate = Mur2Ac(oyl-L-Ala-gamma-D-Glu-L-Lys-D-Ala-D-Ala)-di-trans,octa-cis-undecaprenyl diphosphate + UMP. It participates in cell wall biogenesis; peptidoglycan biosynthesis. Its function is as follows. Catalyzes the initial step of the lipid cycle reactions in the biosynthesis of the cell wall peptidoglycan: transfers peptidoglycan precursor phospho-MurNAc-pentapeptide from UDP-MurNAc-pentapeptide onto the lipid carrier undecaprenyl phosphate, yielding undecaprenyl-pyrophosphoryl-MurNAc-pentapeptide, known as lipid I. This Streptococcus pyogenes serotype M5 (strain Manfredo) protein is Phospho-N-acetylmuramoyl-pentapeptide-transferase.